A 63-amino-acid chain; its full sequence is MIVYVLVGLSAFCIVLYLISQGQSDCVVLITGESVRVQGCRIDGEFGSVLSKLKPFGCGSFRS.

Residues 1-21 form a helical membrane-spanning segment; the sequence is MIVYVLVGLSAFCIVLYLISQ. The Cytoplasmic portion of the chain corresponds to 22-63; that stretch reads GQSDCVVLITGESVRVQGCRIDGEFGSVLSKLKPFGCGSFRS.

The protein belongs to the Tymovirales TGBp3 protein family.

The protein resides in the host endoplasmic reticulum membrane. Plays a role in viral cell-to-cell propagation, by facilitating genome transport to neighboring plant cells through plasmosdesmata. May induce the formation of granular vesicles derived from the Endoplasmic reticulum, which align on actin filaments. This Solanum tuberosum (Potato) protein is Movement protein TGBp3.